A 117-amino-acid polypeptide reads, in one-letter code: Probable non-functional immunoglobulin heavy variable 7-81 (117 aa).

The signal sequence occupies residues 1 to 19; it reads MDWTWSILFLVAAATGTYS. The tract at residues 20-44 is framework-1; it reads QVQLVQSGHEVKQPGASVKVSCKAS. In terms of domain architecture, Ig-like spans 20–117; it reads QVQLVQSGHE…EDMAMYYCAR (98 aa). Cysteine 41 and cysteine 115 form a disulfide bridge. A complementarity-determining-1 region spans residues 45–52; that stretch reads GYSFTTYG. The framework-2 stretch occupies residues 53 to 69; it reads MNWVPQAPGQGLEWMGW. Residues 70–77 form a complementarity-determining-2 region; sequence FNTYTGNP. Asparagine 76 carries an N-linked (GlcNAc...) asparagine glycan. The segment at 78–115 is framework-3; the sequence is TYAQGFTGRFVFSMDTSASTAYLQISSLKAEDMAMYYC. The segment at 116–117 is complementarity-determining-3; it reads AR.

Immunoglobulins are composed of two identical heavy chains and two identical light chains; disulfide-linked.

It is found in the secreted. The protein localises to the cell membrane. Its function is as follows. Probable non-functional open reading frame (ORF) of V region of the variable domain of immunoglobulin heavy chains. Non-functional ORF generally cannot participate in the synthesis of a productive immunoglobulin chain due to altered V-(D)-J or switch recombination and/or splicing site (at mRNA level) and/or conserved amino acid change (protein level). Immunoglobulins, also known as antibodies, are membrane-bound or secreted glycoproteins produced by B lymphocytes. In the recognition phase of humoral immunity, the membrane-bound immunoglobulins serve as receptors which, upon binding of a specific antigen, trigger the clonal expansion and differentiation of B lymphocytes into immunoglobulins-secreting plasma cells. Secreted immunoglobulins mediate the effector phase of humoral immunity, which results in the elimination of bound antigens. The antigen binding site is formed by the variable domain of one heavy chain, together with that of its associated light chain. Thus, each immunoglobulin has two antigen binding sites with remarkable affinity for a particular antigen. The variable domains are assembled by a process called V-(D)-J rearrangement and can then be subjected to somatic hypermutations which, after exposure to antigen and selection, allow affinity maturation for a particular antigen. This Homo sapiens (Human) protein is Probable non-functional immunoglobulin heavy variable 7-81.